The primary structure comprises 494 residues: Alpha-amylase-related protein (494 aa).

The first 20 residues, 1 to 20 (MFKFTFALALCVLAAGLVLA), serve as a signal peptide directing secretion. Position 21 is a pyrrolidone carboxylic acid (Gln21). The cysteines at positions 48 and 104 are disulfide-linked. Asn118, Gln169, and Asp178 together coordinate Ca(2+). Cys157 and Cys171 are disulfide-bonded. Arg206 lines the chloride pocket. The active-site Nucleophile is the Asp208. A Ca(2+)-binding site is contributed by His212. Glu245 acts as the Proton donor in catalysis. The chloride site is built by Asn308 and Arg343. 3 disulfide bridges follow: Cys376–Cys382, Cys418–Cys441, and Cys448–Cys460.

It belongs to the glycosyl hydrolase 13 family. In terms of assembly, monomer. Requires Ca(2+) as cofactor. The cofactor is chloride.

The protein resides in the secreted. The catalysed reaction is Endohydrolysis of (1-&gt;4)-alpha-D-glucosidic linkages in polysaccharides containing three or more (1-&gt;4)-alpha-linked D-glucose units.. This is Alpha-amylase-related protein (Amyrel) from Drosophila pseudoobscura pseudoobscura (Fruit fly).